Here is an 838-residue protein sequence, read N- to C-terminus: Extragenic suppressor of kinetochore protein 1 (838 aa).

Phosphoserine occurs at positions 411 and 418. The disordered stretch occupies residues 411–468 (SDEDDDDSTFSDKNSKDFKETEDMNGAEDMHGRAPQITKDNLNLTTTDSPMSEAEPVS). Position 419 is a phosphothreonine (threonine 419). The segment covering 423-442 (KNSKDFKETEDMNGAEDMHG) has biased composition (basic and acidic residues). Residues serine 425, serine 459, serine 468, and serine 491 each carry the phosphoserine modification. The segment covering 448–460 (TKDNLNLTTTDSP) has biased composition (polar residues). Threonine 493 bears the Phosphothreonine mark. Serine 494 carries the phosphoserine modification. The segment covering 690–700 (ELESNSSDDDV) has biased composition (acidic residues). 2 disordered regions span residues 690–745 (ELES…DQDN) and 757–838 (ISDN…NHGK). Serine 711 and serine 713 each carry phosphoserine. Acidic residues predominate over residues 714–723 (NDEDDGNDED). Basic and acidic residues predominate over residues 724 to 734 (PLSREMSRRLS). 2 stretches are compositionally biased toward acidic residues: residues 768–779 (SDEDDDDDDEVV) and 806–818 (SDSE…DSSD).

Belongs to the SAPS family. As to quaternary structure, interacts with ppe1 and mis12.

It is found in the nucleus. Functionally, has a role in chromosome segregation. May provide a dynamic connection between kinetochore microtubules and kinetochore chromatin. This is Extragenic suppressor of kinetochore protein 1 (ekc1) from Schizosaccharomyces pombe (strain 972 / ATCC 24843) (Fission yeast).